The following is a 393-amino-acid chain: Chalcone synthase (393 aa).

Cys164 is a catalytic residue.

This sequence belongs to the thiolase-like superfamily. Chalcone/stilbene synthases family.

It carries out the reaction (E)-4-coumaroyl-CoA + 3 malonyl-CoA + 3 H(+) = 2',4,4',6'-tetrahydroxychalcone + 3 CO2 + 4 CoA. Its pathway is secondary metabolite biosynthesis; flavonoid biosynthesis. Its function is as follows. The primary product of this enzyme is 4,2',4',6'-tetrahydroxychalcone (also termed naringenin-chalcone or chalcone) which can under specific conditions spontaneously isomerize into naringenin. In Vitis vinifera (Grape), this protein is Chalcone synthase (CHS).